Here is a 272-residue protein sequence, read N- to C-terminus: Indole-3-glycerol phosphate synthase (272 aa).

This sequence belongs to the TrpC family.

It carries out the reaction 1-(2-carboxyphenylamino)-1-deoxy-D-ribulose 5-phosphate + H(+) = (1S,2R)-1-C-(indol-3-yl)glycerol 3-phosphate + CO2 + H2O. It functions in the pathway amino-acid biosynthesis; L-tryptophan biosynthesis; L-tryptophan from chorismate: step 4/5. The sequence is that of Indole-3-glycerol phosphate synthase from Arthrobacter sp. (strain FB24).